Here is a 37-residue protein sequence, read N- to C-terminus: U4-theraphotoxin-Hhn1v (37 aa).

Disulfide bonds link C3–C17, C7–C28, and C22–C33.

It belongs to the neurotoxin 12 (Hwtx-2) family. 02 (Hwtx-2) subfamily. In terms of tissue distribution, expressed by the venom gland.

It is found in the secreted. Functionally, postsynaptic neurotoxin. This chain is U4-theraphotoxin-Hhn1v, found in Cyriopagopus hainanus (Chinese bird spider).